A 79-amino-acid chain; its full sequence is UPF0349 protein BCE33L4669 (79 aa).

It belongs to the UPF0349 family.

This chain is UPF0349 protein BCE33L4669, found in Bacillus cereus (strain ZK / E33L).